The chain runs to 263 residues: Killer cell lectin-like receptor 4 (263 aa).

Topologically, residues 1 to 44 (MTEQEDTFSAVRFHKSSGLQNEMRLKETRKPEKARLRVCSVPWQ) are cytoplasmic. The helical; Signal-anchor for type II membrane protein transmembrane segment at 45-65 (LIVIALGILISLRLVTVAVLM) threads the bilayer. At 66-263 (TNIFQYGQQK…CGKRLDKFPH (198 aa)) the chain is on the extracellular side. N-linked (GlcNAc...) asparagine glycosylation is found at asparagine 87 and asparagine 104. Residues 139-258 (GVKVYWFCYG…SFICICGKRL (120 aa)) enclose the C-type lectin domain. Disulfide bonds link cysteine 146–cysteine 151, cysteine 164–cysteine 252, cysteine 168–cysteine 254, and cysteine 233–cysteine 246. N-linked (GlcNAc...) asparagine glycosylation is found at asparagine 170 and asparagine 222.

As to quaternary structure, homodimer; disulfide-linked. Interacts with the adapter protein TYROBP/DAP12; the interaction leads to natural killer cell activation.

Its subcellular location is the cell membrane. Functionally, receptor on natural killer (NK) cells for class I MHC. This Mus musculus (Mouse) protein is Killer cell lectin-like receptor 4 (Klra4).